A 64-amino-acid polypeptide reads, in one-letter code: DNA gyrase inhibitor YacG (64 aa).

The Zn(2+) site is built by C7, C10, C26, and C30. Positions 43–64 (KRIPGPINPDLLPYPDEGEQWQ) are disordered.

It belongs to the DNA gyrase inhibitor YacG family. Interacts with GyrB. Zn(2+) is required as a cofactor.

Its function is as follows. Inhibits all the catalytic activities of DNA gyrase by preventing its interaction with DNA. Acts by binding directly to the C-terminal domain of GyrB, which probably disrupts DNA binding by the gyrase. This is DNA gyrase inhibitor YacG from Aeromonas salmonicida (strain A449).